The sequence spans 688 residues: Small ribosomal subunit protein mS39 (688 aa).

Residues 1 to 37 (MASVASARWLRVSCGLCVPLTARRAGPCGRTPSSRFY) constitute a mitochondrion transit peptide. Residue Lys126 is modified to N6-acetyllysine. 10 PPR repeats span residues 149–183 (IEEI…GTTV), 184–219 (SLET…EELE), 258–292 (NAHS…RLRA), 293–333 (DVHT…NVKP), 334–370 (NLQT…GIEP), 371–412 (SLAT…SPKD), 415–449 (DDMF…DNRK), 457–491 (RNFY…VFFP), 492–526 (HSQT…GHTF), and 575–609 (PANS…NKIP). The segment at 667–688 (GDLTALTSDSESDSDSDTSKDK) is disordered.

The protein belongs to the mitochondrion-specific ribosomal protein mS39 family. As to quaternary structure, component of the mitochondrial ribosome small subunit (28S) which comprises a 12S rRNA and about 30 distinct proteins. Associated with the 12S mitochondrial rRNA (12S mt-rRNA).

It is found in the mitochondrion. In terms of biological role, mitochondrial RNA-binding protein that has a role in mitochondrial translation. The protein is Small ribosomal subunit protein mS39 (PTCD3) of Bos taurus (Bovine).